A 463-amino-acid chain; its full sequence is Lactadherin (463 aa).

The signal sequence occupies residues Met1–Ala22. EGF-like domains lie at Ser24 to Asn61 and Glu64 to Glu108. Cystine bridges form between Cys28/Cys39, Cys33/Cys49, and Cys51/Cys60. Asn61 carries N-linked (GlcNAc...) asparagine glycosylation. Cystine bridges form between Cys68–Cys79, Cys73–Cys96, Cys98–Cys107, Cys148–Cys303, Cys290–Cys294, and Cys308–Cys463. A Cell attachment site motif is present at residues Arg87–Asp89. 2 consecutive F5/8 type C domains span residues Cys148 to Cys303 and Cys308 to Cys463. A glycan (N-linked (GlcNAc...) asparagine) is linked at Asn266. Residues Asn316 and Asn426 are each glycosylated (N-linked (GlcNAc...) asparagine).

N-glycosylated. Isoform 1 also exists in both an O-glycosylated and a non-O-glycosylated form. In terms of tissue distribution, mammary epithelial cell surfaces and spermatozoan. Isoform 2 is present in brain, heart, kidney and spleen and at low levels in lung, liver, small intestine and testis.

Its subcellular location is the membrane. It is found in the secreted. The protein resides in the cytoplasmic vesicle. The protein localises to the secretory vesicle. It localises to the acrosome membrane. In terms of biological role, contributes to phagocytic removal of apoptotic cells in many tissues. Specific ligand for the alpha-v/beta-3 and alpha-v/beta-5 receptors. Also binds to phosphatidylserine-enriched cell surfaces in a receptor-independent manner. Zona pellucida-binding protein which may play a role in gamete interaction. Plays an important role in the maintenance of intestinal epithelial homeostasis and the promotion of mucosal healing. Promotes VEGF-dependent neovascularization. This Mus musculus (Mouse) protein is Lactadherin (Mfge8).